The chain runs to 198 residues: dTTP/UTP pyrophosphatase (198 aa).

The active-site Proton acceptor is Asp72.

It belongs to the Maf family. YhdE subfamily. Requires a divalent metal cation as cofactor.

The protein resides in the cytoplasm. It catalyses the reaction dTTP + H2O = dTMP + diphosphate + H(+). It carries out the reaction UTP + H2O = UMP + diphosphate + H(+). Nucleoside triphosphate pyrophosphatase that hydrolyzes dTTP and UTP. May have a dual role in cell division arrest and in preventing the incorporation of modified nucleotides into cellular nucleic acids. The chain is dTTP/UTP pyrophosphatase from Pseudomonas fluorescens (strain Pf0-1).